The following is a 115-amino-acid chain: Glutaredoxin-like protein C5orf63 homolog (115 aa).

Cys-40 and Cys-43 form a disulfide bridge.

This sequence belongs to the glutaredoxin family. YDR286C subfamily.

This chain is Glutaredoxin-like protein C5orf63 homolog, found in Mus musculus (Mouse).